Consider the following 332-residue polypeptide: Probable electron transfer flavoprotein subunit alpha, mitochondrial (332 aa).

FAD is bound at residue 275–303; it reads LYIAIGISGAIQHLAGMKDSKVIVAINKD.

Belongs to the ETF alpha-subunit/FixB family. Heterodimer of an alpha and a beta subunit. It depends on FAD as a cofactor.

The protein localises to the mitochondrion matrix. The electron transfer flavoprotein serves as a specific electron acceptor for several dehydrogenases, including five acyl-CoA dehydrogenases, glutaryl-CoA and sarcosine dehydrogenase. It transfers the electrons to the main mitochondrial respiratory chain via ETF-ubiquinone oxidoreductase (ETF dehydrogenase). This Caenorhabditis elegans protein is Probable electron transfer flavoprotein subunit alpha, mitochondrial.